A 142-amino-acid polypeptide reads, in one-letter code: MVLSSADKNNVKACWGKIGSHAGEYGAEALERTFCSFPTTKTYFPHFDLSHGSAQVQAHGQKVADALTKAVAHINDLPNALSDLSDLHAYKLRVDPVNFKFLSHCLLVTLACHHPEEFTPAVHASLDKFFSAVSTVLTSKYR.

The 141-residue stretch at 2 to 142 folds into the Globin domain; that stretch reads VLSSADKNNV…VSTVLTSKYR (141 aa). Serine 4 carries the post-translational modification Phosphoserine. N6-succinyllysine is present on residues lysine 8 and lysine 12. Position 17 is an N6-acetyllysine; alternate (lysine 17). Lysine 17 bears the N6-succinyllysine; alternate mark. Tyrosine 25 carries the post-translational modification Phosphotyrosine. The residue at position 36 (serine 36) is a Phosphoserine. Residue lysine 41 is modified to N6-succinyllysine. Serine 50 bears the Phosphoserine mark. Residue histidine 59 participates in O2 binding. Residue histidine 88 participates in heme b binding. Position 103 is a phosphoserine (serine 103). At threonine 109 the chain carries Phosphothreonine. Serine 125 is subject to Phosphoserine. Phosphothreonine occurs at positions 135 and 138. Serine 139 carries the phosphoserine modification.

It belongs to the globin family. Heterotetramer of two alpha chains and two beta chains. As to expression, red blood cells.

Functionally, involved in oxygen transport from the lung to the various peripheral tissues. Hemopressin acts as an antagonist peptide of the cannabinoid receptor CNR1. Hemopressin-binding efficiently blocks cannabinoid receptor CNR1 and subsequent signaling. The sequence is that of Hemoglobin subunit alpha (HBA) from Panthera onca (Jaguar).